We begin with the raw amino-acid sequence, 107 residues long: Nucleoid-associated protein RT0857 (107 aa).

It belongs to the YbaB/EbfC family. As to quaternary structure, homodimer.

It is found in the cytoplasm. The protein resides in the nucleoid. Binds to DNA and alters its conformation. May be involved in regulation of gene expression, nucleoid organization and DNA protection. The protein is Nucleoid-associated protein RT0857 of Rickettsia typhi (strain ATCC VR-144 / Wilmington).